The following is a 454-amino-acid chain: Serine/threonine-protein kinase NLK2 (454 aa).

The region spanning 67–356 (PEPDRPIGYG…AKDALAHPYL (290 aa)) is the Protein kinase domain. Residues 73–81 (IGYGAFGVV) and Lys-96 each bind ATP. The active-site Proton acceptor is the Asp-193.

It belongs to the protein kinase superfamily. CMGC Ser/Thr protein kinase family. MAP kinase subfamily. Interacts with sox11, hmgxb4/hmg2l1, rnf138/narf, stat3.1 and mef2a. Mg(2+) is required as a cofactor.

It localises to the nucleus. The protein localises to the cytoplasm. The catalysed reaction is L-seryl-[protein] + ATP = O-phospho-L-seryl-[protein] + ADP + H(+). It catalyses the reaction L-threonyl-[protein] + ATP = O-phospho-L-threonyl-[protein] + ADP + H(+). Its activity is regulated as follows. Activated by tyrosine and threonine phosphorylation. In terms of biological role, negatively regulates Wnt/beta-catenin-signaling during development. Plays a role together with sox11 in neural induction during early embryogenesis. Involved in TGFbeta-mediated mesoderm induction in early embryos, acting downstream of map3k7/tak1 to phosphorylate stat3. Augments the rnf138/narf-directed ubiquitination and degradation of tcf/lef by enhancing the association of rnf138/narf and tcf/lef. Phosphorylates mef2a to play a role in anterior neural development, including eye formation. The protein is Serine/threonine-protein kinase NLK2 (nlk.2) of Xenopus tropicalis (Western clawed frog).